The primary structure comprises 1430 residues: Target of rapamycin complex 2 subunit TSC11 (1430 aa).

The disordered stretch occupies residues 1-62 (MSIPHSAKQS…TITNESSKRN (62 aa)). Polar residues-rich tracts occupy residues 7 to 26 (AKQS…TTPL) and 35 to 44 (NSSTQISSAK). Ser19 is modified (phosphoserine). The segment covering 45–57 (NITSSSPSTITNE) has biased composition (low complexity). Residues Ser81, Ser84, Ser87, and Ser141 each carry the phosphoserine modification. A coiled-coil region spans residues 91 to 180 (ARRTRSTMTK…EKHIFDLKQQ (90 aa)). The interval 182-285 (DKKRQRSLTT…NLTGDTEKDL (104 aa)) is disordered. A compositionally biased stretch (polar residues) spans 233–265 (TTPTSGTERNSQQNLNRNSTVNSRNNENHSTLS). Positions 995–1100 (SVVAVADQAL…FQQKSRLPLH (106 aa)) constitute an N-terminal Ras-GEF domain.

Belongs to the RICTOR family. The target of rapamycin complex 2 (TORC2) is composed of at least AVO1, AVO2, BIT61, LST8, TOR2 and TSC11. TORC2 forms a homodimer. Contrary to TORC1, TORC2 does not bind to and is not sensitive to FKBP-rapamycin. TSC11 binds to the N-terminal HEAT repeat region in TOR2 and is required for TORC2 integrity by tethering AVO1 and AVO2 to the complex. Post-translationally, phosphorylated by TOR2; when part of TORC2.

It localises to the cell membrane. The protein localises to the vacuole membrane. In terms of biological role, essential component of TORC2, which regulates cell cycle-dependent polarization of the actin-cytoskeleton and cell wall integrity. TORC2 controls polarity of the actin cytoskeleton, which is required for orienting the secretory pathway toward discrete growth sites, via the RHO1/PKC1/MAPK cell integrity pathway. TSC11 may exert its functions through two distinct mechanisms, one mediated by AVO1 and the other mediated by AVO2 and SLM1. This is Target of rapamycin complex 2 subunit TSC11 (TSC11) from Saccharomyces cerevisiae (strain ATCC 204508 / S288c) (Baker's yeast).